A 72-amino-acid chain; its full sequence is MSKEDVIEVEGKVLEPLPNAMFLVELSNGHKVLAHVSGKIRMNFIRILPGDRVTVELSPYDLSRGRIVYRFK.

The 72-residue stretch at 1 to 72 (MSKEDVIEVE…SRGRIVYRFK (72 aa)) folds into the S1-like domain.

Belongs to the IF-1 family. As to quaternary structure, component of the 30S ribosomal translation pre-initiation complex which assembles on the 30S ribosome in the order IF-2 and IF-3, IF-1 and N-formylmethionyl-tRNA(fMet); mRNA recruitment can occur at any time during PIC assembly.

It localises to the cytoplasm. Functionally, one of the essential components for the initiation of protein synthesis. Stabilizes the binding of IF-2 and IF-3 on the 30S subunit to which N-formylmethionyl-tRNA(fMet) subsequently binds. Helps modulate mRNA selection, yielding the 30S pre-initiation complex (PIC). Upon addition of the 50S ribosomal subunit IF-1, IF-2 and IF-3 are released leaving the mature 70S translation initiation complex. This is Translation initiation factor IF-1 from Desulfitobacterium hafniense (strain Y51).